The following is a 159-amino-acid chain: SsrA-binding protein (159 aa).

The segment at 134-159 (KEHDKRDTERDRDWSRDKERLMKHNA) is disordered.

The protein belongs to the SmpB family.

It localises to the cytoplasm. Functionally, required for rescue of stalled ribosomes mediated by trans-translation. Binds to transfer-messenger RNA (tmRNA), required for stable association of tmRNA with ribosomes. tmRNA and SmpB together mimic tRNA shape, replacing the anticodon stem-loop with SmpB. tmRNA is encoded by the ssrA gene; the 2 termini fold to resemble tRNA(Ala) and it encodes a 'tag peptide', a short internal open reading frame. During trans-translation Ala-aminoacylated tmRNA acts like a tRNA, entering the A-site of stalled ribosomes, displacing the stalled mRNA. The ribosome then switches to translate the ORF on the tmRNA; the nascent peptide is terminated with the 'tag peptide' encoded by the tmRNA and targeted for degradation. The ribosome is freed to recommence translation, which seems to be the essential function of trans-translation. The polypeptide is SsrA-binding protein (Marinomonas sp. (strain MWYL1)).